Reading from the N-terminus, the 124-residue chain is Small polypeptide ROTUNDIFOLIA LIKE 3 (124 aa).

Residues 1–23 (MEDERWKLSSSKGRSKSGRSCSS) are disordered. Residues Asn-35 and Asn-38 are each glycosylated (N-linked (GlcNAc...) asparagine). The chain crosses the membrane as a helical span at residues 59–75 (AWSAAGAGGGGASSSSS). The interval 60-95 (WSAAGAGGGGASSSSSSQHQHQQQQQQSNNSQRLSK) is disordered. A compositionally biased stretch (low complexity) spans 71–91 (SSSSSSQHQHQQQQQQSNNSQ). An N-linked (GlcNAc...) asparagine glycan is attached at Asn-88. The segment at 92–124 (RLSKKCVEAVKEHRARFYIVRRCVSMLVCWRDY) is required for DVL/RTFL small polypeptide activity.

The protein belongs to the DVL/RTFL small polypeptides family.

It localises to the cell membrane. Functionally, small polypeptide acting as a regulatory molecule which coordinates cellular responses required for differentiation, growth and development, probably by restricting polar cell proliferation in lateral organs (e.g. leaves and petioles). This is Small polypeptide ROTUNDIFOLIA LIKE 3 from Oryza sativa subsp. japonica (Rice).